The following is a 150-amino-acid chain: MKSIEVHTDGSCLGNPGPGGWAALLRYNGREKELAGGEAVSTNNRMELMAAIMALETLTEPCEIVLHTDSQYVRQGITEWMPGWVRRNWKTAGGDPVKNRELWERLHAATQRHRIDWRWVKGHNGDPDNERVDVLARNQATAQRDGRATS.

The RNase H type-1 domain occupies 1–141 (MKSIEVHTDG…VDVLARNQAT (141 aa)). Residues Asp9, Glu47, Asp69, and Asp133 each contribute to the Mg(2+) site.

Belongs to the RNase H family. In terms of assembly, monomer. Requires Mg(2+) as cofactor.

It localises to the cytoplasm. It catalyses the reaction Endonucleolytic cleavage to 5'-phosphomonoester.. Functionally, endonuclease that specifically degrades the RNA of RNA-DNA hybrids. In Xanthomonas oryzae pv. oryzae (strain MAFF 311018), this protein is Ribonuclease H.